The sequence spans 105 residues: MSFKEITPQQAWEMMQQGAILVDIRDNMRFAYSHPKGAFHLTNQSFLQFEELADFDSPIIVSCYHGVSSRNVATFLVEQGYENVFSMIGGFDGWCRAELPIDTAY.

The Rhodanese domain occupies 15-103 (MQQGAILVDI…WCRAELPIDT (89 aa)). Cys-63 serves as the catalytic Cysteine persulfide intermediate.

Belongs to the GlpE family.

The protein resides in the cytoplasm. The enzyme catalyses thiosulfate + hydrogen cyanide = thiocyanate + sulfite + 2 H(+). It carries out the reaction thiosulfate + [thioredoxin]-dithiol = [thioredoxin]-disulfide + hydrogen sulfide + sulfite + 2 H(+). Transferase that catalyzes the transfer of sulfur from thiosulfate to thiophilic acceptors such as cyanide or dithiols. May function in a CysM-independent thiosulfate assimilation pathway by catalyzing the conversion of thiosulfate to sulfite, which can then be used for L-cysteine biosynthesis. The protein is Thiosulfate sulfurtransferase GlpE of Haemophilus influenzae (strain PittEE).